We begin with the raw amino-acid sequence, 525 residues long: GMP synthase [glutamine-hydrolyzing] (525 aa).

The Glutamine amidotransferase type-1 domain occupies 16–205 (PVLVVDFGAQ…LHDFAGLGAQ (190 aa)). Residue Cys93 is the Nucleophile of the active site. Catalysis depends on residues His179 and Glu181. The region spanning 206 to 399 (WTPANIANAL…LGLPEEIVAR (194 aa)) is the GMPS ATP-PPase domain. An ATP-binding site is contributed by 233-239 (SGGVDSA).

Homodimer.

It catalyses the reaction XMP + L-glutamine + ATP + H2O = GMP + L-glutamate + AMP + diphosphate + 2 H(+). The protein operates within purine metabolism; GMP biosynthesis; GMP from XMP (L-Gln route): step 1/1. Its function is as follows. Catalyzes the synthesis of GMP from XMP. The protein is GMP synthase [glutamine-hydrolyzing] (guaA) of Mycobacterium tuberculosis (strain CDC 1551 / Oshkosh).